The following is a 409-amino-acid chain: Sprouty-related, EVH1 domain-containing protein 2 (409 aa).

The 117-residue stretch at 5 to 121 (APPEDDSYIV…RGVRKAIEDL (117 aa)) folds into the WH1 domain. The tract at residues 121–170 (LTEGSTTSSSTIHNEAELGDDDVFATSTDSSSNSSQKREPPVRTIASPLP) is disordered. Over residues 123-133 (EGSTTSSSTIH) the composition is skewed to polar residues. The span at 146-155 (TSTDSSSNSS) shows a compositional bias: low complexity. In terms of domain architecture, KBD spans 199 to 253 (PHRHVSFPDDDDEIVRINPRERNWLTGYEDYRQAPIHRKYPDTESIDSYVRFAKS). The 109-residue stretch at 299–407 (RCIYCRDMFN…CGCCGGKHKA (109 aa)) folds into the SPR domain.

The protein resides in the cell membrane. It localises to the cytoplasmic vesicle. Its subcellular location is the secretory vesicle membrane. It is found in the cytoplasm. Its function is as follows. Negatively regulates Ras signaling pathways and downstream activation of MAP kinases. The chain is Sprouty-related, EVH1 domain-containing protein 2 (spred2) from Xenopus tropicalis (Western clawed frog).